The following is a 262-amino-acid chain: Zinc finger protein 138 (262 aa).

A C2H2-type 1 zinc finger spans residues 110-132 (FRCKECDKSLCMLSRLTQHKKIH). The C2H2-type 2; degenerate zinc finger occupies 138 to 160 (YKCEECGKTFNWSTNLSKPKKIH). A C2H2-type 3; degenerate zinc finger spans residues 166–188 (YKCEVCGKAFHQSSILTKHKIIR). The segment at 194-216 (YKCAHCGKAFKQSSHLTRHKIIH) adopts a C2H2-type 4 zinc-finger fold. The C2H2-type 5; degenerate zinc finger occupies 222–244 (YKCEQCGKVFKQSPTLTKHQIIY). The C2H2-type 6; degenerate zinc finger occupies 250-262 (YKCEECGKAFNLS).

This sequence belongs to the krueppel C2H2-type zinc-finger protein family.

The protein localises to the nucleus. In terms of biological role, may be involved in transcriptional regulation as a repressor. The polypeptide is Zinc finger protein 138 (ZNF138) (Homo sapiens (Human)).